We begin with the raw amino-acid sequence, 367 residues long: Gelsolin-like protein 1 (367 aa).

Residues 1–185 (MATGLIKAKE…GQKQQIYVHE (185 aa)) form an actin binding region. Gelsolin-like repeat units follow at residues 56–141 (NFKV…ELFR) and 179–225 (QQIY…KAMQ). An actin-actin interfilament contact point region spans residues 106 to 109 (DEYG). Residues 186–295 (VPLVKERLDH…LKTTEVKRGA (110 aa)) are actin binding, Actin-severing. Positions 235 to 257 (PKAEAETLEDESTPESHKFYTSL) are disordered. A Gelsolin-like 3 repeat occupies 287–322 (KTTEVKRGAVNSKDFSSNDVFILDTGDQCFVWVGKG). An actin-severing, Ca-sensitive region spans residues 296–366 (VNSKDFSSND…LCKAFNVAIA (71 aa)).

This sequence belongs to the villin/gelsolin family. As to quaternary structure, interacts with actin monomers and filaments. Expressed in circular and longitudinal muscle, pseudohearts, pharynx and gizzard. Also expressed in male germ cells at the proximal pole of primary spermatocytes in 16 cell-stage morulae, and in the distal parts of the spermatocytes in 32 and 64 cell-stage morulae. In the spermatids of the 128 cell-stage morulae it is expressed at the proximal pole of the elongated nucleus and the distal pole near the base of the flagellae.

The protein resides in the cytoplasm. It is found in the cytoskeleton. Calcium-regulated protein that binds to the plus (or barbed) ends of actin monomers or filaments, preventing monomer exchange (end-blocking or capping). Can promote the assembly of monomers into filaments (nucleation) as well as sever existing filaments. In Lumbricus terrestris (Common earthworm), this protein is Gelsolin-like protein 1.